A 393-amino-acid chain; its full sequence is Riboflavin biosynthesis protein RibBA (393 aa).

Residues 1-200 form a DHBP synthase region; it reads MQFDNIDSAL…IDDLIEYRKK (200 aa). Residues 27–28, aspartate 32, 139–143, and glutamate 163 contribute to the D-ribulose 5-phosphate site; these read RE and RNGHT. Glutamate 28 is a binding site for Mg(2+). Histidine 142 serves as a coordination point for Mg(2+). The interval 201–393 is GTP cyclohydrolase II; the sequence is LEPEIEFKAK…TKKIKMGHLI (193 aa). Residue 249–253 coordinates GTP; that stretch reads RLHSA. Cysteine 254, cysteine 265, and cysteine 267 together coordinate Zn(2+). GTP is bound by residues glutamine 270, 291–293, and threonine 313; that span reads EGR. Catalysis depends on aspartate 325, which acts as the Proton acceptor; for GTP cyclohydrolase activity. The Nucleophile; for GTP cyclohydrolase activity role is filled by arginine 327. Serine 348 and lysine 353 together coordinate GTP.

It in the N-terminal section; belongs to the DHBP synthase family. The protein in the C-terminal section; belongs to the GTP cyclohydrolase II family. The cofactor is Mg(2+). Requires Mn(2+) as cofactor. It depends on Zn(2+) as a cofactor.

The enzyme catalyses D-ribulose 5-phosphate = (2S)-2-hydroxy-3-oxobutyl phosphate + formate + H(+). It carries out the reaction GTP + 4 H2O = 2,5-diamino-6-hydroxy-4-(5-phosphoribosylamino)-pyrimidine + formate + 2 phosphate + 3 H(+). It participates in cofactor biosynthesis; riboflavin biosynthesis; 2-hydroxy-3-oxobutyl phosphate from D-ribulose 5-phosphate: step 1/1. The protein operates within cofactor biosynthesis; riboflavin biosynthesis; 5-amino-6-(D-ribitylamino)uracil from GTP: step 1/4. Functionally, catalyzes the conversion of D-ribulose 5-phosphate to formate and 3,4-dihydroxy-2-butanone 4-phosphate. Catalyzes the conversion of GTP to 2,5-diamino-6-ribosylamino-4(3H)-pyrimidinone 5'-phosphate (DARP), formate and pyrophosphate. The chain is Riboflavin biosynthesis protein RibBA from Staphylococcus aureus (strain MSSA476).